We begin with the raw amino-acid sequence, 421 residues long: Phosphoribosylamine--glycine ligase (421 aa).

The 207-residue stretch at 108-314 folds into the ATP-grasp domain; that stretch reads KEIMVKYNVP…FAQNIDDIMM (207 aa). 134–195 serves as a coordination point for ATP; it reads IEEQGAPIVV…EEFLDGEEFS (62 aa). Residues E284 and N286 each coordinate Mg(2+).

Belongs to the GARS family. Mg(2+) serves as cofactor. Mn(2+) is required as a cofactor.

It catalyses the reaction 5-phospho-beta-D-ribosylamine + glycine + ATP = N(1)-(5-phospho-beta-D-ribosyl)glycinamide + ADP + phosphate + H(+). It functions in the pathway purine metabolism; IMP biosynthesis via de novo pathway; N(1)-(5-phospho-D-ribosyl)glycinamide from 5-phospho-alpha-D-ribose 1-diphosphate: step 2/2. The chain is Phosphoribosylamine--glycine ligase from Streptococcus pyogenes serotype M18 (strain MGAS8232).